A 141-amino-acid polypeptide reads, in one-letter code: Large ribosomal subunit protein uL6 (141 aa).

The protein belongs to the universal ribosomal protein uL6 family.

This chain is Large ribosomal subunit protein uL6, found in Haemonchus contortus (Barber pole worm).